A 418-amino-acid polypeptide reads, in one-letter code: NADH-quinone oxidoreductase subunit D (418 aa).

Belongs to the complex I 49 kDa subunit family. In terms of assembly, NDH-1 is composed of 14 different subunits. Subunits NuoB, C, D, E, F, and G constitute the peripheral sector of the complex.

Its subcellular location is the cell inner membrane. It carries out the reaction a quinone + NADH + 5 H(+)(in) = a quinol + NAD(+) + 4 H(+)(out). In terms of biological role, NDH-1 shuttles electrons from NADH, via FMN and iron-sulfur (Fe-S) centers, to quinones in the respiratory chain. The immediate electron acceptor for the enzyme in this species is believed to be ubiquinone. Couples the redox reaction to proton translocation (for every two electrons transferred, four hydrogen ions are translocated across the cytoplasmic membrane), and thus conserves the redox energy in a proton gradient. This chain is NADH-quinone oxidoreductase subunit D, found in Neisseria meningitidis serogroup C / serotype 2a (strain ATCC 700532 / DSM 15464 / FAM18).